An 81-amino-acid chain; its full sequence is Cytochrome b559 subunit alpha (81 aa).

A helical transmembrane segment spans residues 21–35; that stretch reads VIHALTIPALFLAGW. His-23 contributes to the heme binding site.

The protein belongs to the PsbE/PsbF family. In terms of assembly, heterodimer of an alpha subunit and a beta subunit. PSII is composed of 1 copy each of membrane proteins PsbA, PsbB, PsbC, PsbD, PsbE, PsbF, PsbH, PsbI, PsbJ, PsbK, PsbL, PsbM, PsbT, PsbX, PsbY, PsbZ, Psb30/Ycf12, peripheral proteins PsbO, CyanoQ (PsbQ), PsbU, PsbV and a large number of cofactors. It forms dimeric complexes. It depends on heme b as a cofactor.

Its subcellular location is the cellular thylakoid membrane. Functionally, this b-type cytochrome is tightly associated with the reaction center of photosystem II (PSII). PSII is a light-driven water:plastoquinone oxidoreductase that uses light energy to abstract electrons from H(2)O, generating O(2) and a proton gradient subsequently used for ATP formation. It consists of a core antenna complex that captures photons, and an electron transfer chain that converts photonic excitation into a charge separation. The sequence is that of Cytochrome b559 subunit alpha from Synechococcus sp. (strain JA-2-3B'a(2-13)) (Cyanobacteria bacterium Yellowstone B-Prime).